A 240-amino-acid chain; its full sequence is Ribosomal RNA small subunit methyltransferase G (240 aa).

S-adenosyl-L-methionine contacts are provided by residues G77, F82, 128–129 (AE), and R148. Residues 217 to 240 (EKRSKTPKKYPRKAGTPNKSPLLK) are disordered.

The protein belongs to the methyltransferase superfamily. RNA methyltransferase RsmG family.

The protein resides in the cytoplasm. Specifically methylates the N7 position of guanine in position 535 of 16S rRNA. This chain is Ribosomal RNA small subunit methyltransferase G, found in Staphylococcus carnosus (strain TM300).